Consider the following 599-residue polypeptide: Serine hydroxymethyltransferase 6 (599 aa).

A disordered region spans residues 1-25 (MDRIAQSDLSLGFGSSHALPLPHPP). Position 374 is an N6-(pyridoxal phosphate)lysine (Lys374).

It belongs to the SHMT family. As to quaternary structure, homotetramer. It depends on pyridoxal 5'-phosphate as a cofactor.

The protein localises to the cytoplasm. The enzyme catalyses (6R)-5,10-methylene-5,6,7,8-tetrahydrofolate + glycine + H2O = (6S)-5,6,7,8-tetrahydrofolate + L-serine. It functions in the pathway one-carbon metabolism; tetrahydrofolate interconversion. Functionally, catalyzes the interconversion of serine and glycine. In Arabidopsis thaliana (Mouse-ear cress), this protein is Serine hydroxymethyltransferase 6 (SHM6).